The primary structure comprises 161 residues: Gamma-glutamylaminecyclotransferase A (161 aa).

Residue 26 to 29 coordinates substrate; sequence YGTL. E101 acts as the Proton acceptor in catalysis.

This sequence belongs to the gamma-glutamylcyclotransferase family.

It carries out the reaction epsilon-(gamma-L-glutamyl)-L-lysine = 5-oxo-L-proline + L-lysine. In terms of biological role, may contribute to degradation of proteins cross-linked by transglutaminases by degrading the cross-link between a lysine and a glutamic acid residue. Catalyzes the formation of 5-oxo-L-proline from L-gamma-glutamyl-L-epsilon-lysine. The protein is Gamma-glutamylaminecyclotransferase A (ggact.1) of Danio rerio (Zebrafish).